Consider the following 459-residue polypeptide: ATP-dependent protease ATPase subunit HslU (459 aa).

ATP contacts are provided by residues Val18, 60–65 (GVGKTE), Asp272, Glu337, and Arg409.

The protein belongs to the ClpX chaperone family. HslU subfamily. In terms of assembly, a double ring-shaped homohexamer of HslV is capped on each side by a ring-shaped HslU homohexamer. The assembly of the HslU/HslV complex is dependent on binding of ATP.

It is found in the cytoplasm. Functionally, ATPase subunit of a proteasome-like degradation complex; this subunit has chaperone activity. The binding of ATP and its subsequent hydrolysis by HslU are essential for unfolding of protein substrates subsequently hydrolyzed by HslV. HslU recognizes the N-terminal part of its protein substrates and unfolds these before they are guided to HslV for hydrolysis. This chain is ATP-dependent protease ATPase subunit HslU, found in Thermoanaerobacter pseudethanolicus (strain ATCC 33223 / 39E) (Clostridium thermohydrosulfuricum).